A 213-amino-acid polypeptide reads, in one-letter code: ATP-dependent dethiobiotin synthetase BioD (213 aa).

13–18 is an ATP binding site; that stretch reads GIGKTV. A Mg(2+)-binding site is contributed by Thr-17. The active site involves Lys-33. Residue Glu-100 participates in Mg(2+) binding. Residues 100–103 and 184–186 contribute to the ATP site; these read EGAG and PHL.

The protein belongs to the dethiobiotin synthetase family. As to quaternary structure, homodimer. Requires Mg(2+) as cofactor.

Its subcellular location is the cytoplasm. It catalyses the reaction (7R,8S)-7,8-diammoniononanoate + CO2 + ATP = (4R,5S)-dethiobiotin + ADP + phosphate + 3 H(+). The protein operates within cofactor biosynthesis; biotin biosynthesis; biotin from 7,8-diaminononanoate: step 1/2. In terms of biological role, catalyzes a mechanistically unusual reaction, the ATP-dependent insertion of CO2 between the N7 and N8 nitrogen atoms of 7,8-diaminopelargonic acid (DAPA, also called 7,8-diammoniononanoate) to form a ureido ring. The sequence is that of ATP-dependent dethiobiotin synthetase BioD from Rhodopseudomonas palustris (strain BisA53).